A 439-amino-acid polypeptide reads, in one-letter code: Ribosomal protein uS12 methylthiotransferase RimO (439 aa).

The MTTase N-terminal domain maps to 3–113 (HKVGFVSLGC…VVNAVHQHLP (111 aa)). Positions 12, 48, 77, 144, 148, and 151 each coordinate [4Fe-4S] cluster. The region spanning 130–367 (LTPRHYAYLK…MQVQAEISRN (238 aa)) is the Radical SAM core domain. In terms of domain architecture, TRAM spans 370–436 (KNKIGSTQTV…DYDLYGDLEY (67 aa)).

Belongs to the methylthiotransferase family. RimO subfamily. The cofactor is [4Fe-4S] cluster.

The protein localises to the cytoplasm. It catalyses the reaction L-aspartate(89)-[ribosomal protein uS12]-hydrogen + (sulfur carrier)-SH + AH2 + 2 S-adenosyl-L-methionine = 3-methylsulfanyl-L-aspartate(89)-[ribosomal protein uS12]-hydrogen + (sulfur carrier)-H + 5'-deoxyadenosine + L-methionine + A + S-adenosyl-L-homocysteine + 2 H(+). Its function is as follows. Catalyzes the methylthiolation of an aspartic acid residue of ribosomal protein uS12. This is Ribosomal protein uS12 methylthiotransferase RimO from Legionella pneumophila (strain Paris).